Here is a 376-residue protein sequence, read N- to C-terminus: Chaperone protein DnaJ (376 aa).

In terms of domain architecture, J spans 5–70 (DYYEVLGVGR…DKKAAYDQFG (66 aa)). The CR-type zinc-finger motif lies at 132-210 (GLTKELKVPT…CHGNGRVEKT (79 aa)). Positions 145, 148, 162, 165, 184, 187, 198, and 201 each coordinate Zn(2+). CXXCXGXG motif repeat units follow at residues 145 to 152 (CDSCDGSG), 162 to 169 (CGTCHGMG), 184 to 191 (CPTCHGRG), and 198 to 205 (CSKCHGNG).

It belongs to the DnaJ family. Homodimer. Zn(2+) is required as a cofactor.

The protein resides in the cytoplasm. In terms of biological role, participates actively in the response to hyperosmotic and heat shock by preventing the aggregation of stress-denatured proteins and by disaggregating proteins, also in an autonomous, DnaK-independent fashion. Unfolded proteins bind initially to DnaJ; upon interaction with the DnaJ-bound protein, DnaK hydrolyzes its bound ATP, resulting in the formation of a stable complex. GrpE releases ADP from DnaK; ATP binding to DnaK triggers the release of the substrate protein, thus completing the reaction cycle. Several rounds of ATP-dependent interactions between DnaJ, DnaK and GrpE are required for fully efficient folding. Also involved, together with DnaK and GrpE, in the DNA replication of plasmids through activation of initiation proteins. The protein is Chaperone protein DnaJ of Shewanella amazonensis (strain ATCC BAA-1098 / SB2B).